The chain runs to 757 residues: Transmembrane channel-like protein 1 (757 aa).

Residues 1 to 74 are disordered; sequence MLQIQVEEKE…RRRLRRGAEE (74 aa). Over 1–176 the chain is Cytoplasmic; sequence MLQIQVEEKE…KIKAIESQFG (176 aa). Residues 8–23 are compositionally biased toward acidic residues; it reads EKEEDTEESSSEEEED. Position 30 is a phosphoserine (S30). Phosphothreonine is present on T38. Residues 43–54 show a composition bias toward acidic residues; sequence NEDDPEPEPEDE. The interval 81 to 130 is required for interaction with CIB2; it reads EELERLKALLDENRQMIATVKCKPWKMEKKIEVLKEAKKFVSENEGALGK. At S122 the chain carries Phosphoserine. The helical transmembrane segment at 177-214 threads the bilayer; it reads SSVASYFLFLRWMYGVNMVLFVLTFSLIMLPEYLWGLP. At 215–265 the chain is on the extracellular side; it reads YGSLPRKTVPRAEEASAANFGVLYDFNGLAQYSVLFYGYYDNKRTIGWLNF. Residues 266-297 traverse the membrane as a helical segment; that stretch reads RLPLSYFLVGIMCIGYSFLVVLKAMTKNIGDD. The required for interaction with CIB2 stretch occupies residues 298 to 352; sequence GGGDDNTFNFSWKVFCSWDYLIGNPETADNKFNSITMNFKEAIIEERAAQVEENI. Residues 298–353 lie on the Cytoplasmic side of the membrane; that stretch reads GGGDDNTFNFSWKVFCSWDYLIGNPETADNKFNSITMNFKEAIIEERAAQVEENIH. Phosphoserine is present on S308. The chain crosses the membrane as a helical span at residues 354-384; sequence LIRFLRFLANFFVFLTLGASGYLIFWAVKRS. Over 385-396 the chain is Extracellular; that stretch reads QEFAQQDPDTLG. T394 carries the phosphothreonine modification. The helical transmembrane segment at 397-424 threads the bilayer; sequence WWEKNEMNMVMSLLGMFCPTLFDLFAEL. Over 425–428 the chain is Cytoplasmic; the sequence is EDYH. Residues 429–463 form a helical membrane-spanning segment; it reads PLIALKWLLGRIFALLLGNLYVFILALMDEINNKI. Residues 464-512 are Extracellular-facing; it reads EEEKLVKANITLWEANMIKAYNESLSGLSGNTTGAPFFVHPADVPRGPC. Residues 513–550 traverse the membrane as a helical segment; the sequence is WETMVGQEFVRLTVSDVLTTYVTILIGDFLRACFVRFC. Topologically, residues 551–569 are cytoplasmic; sequence NYCWCWDLEYGYPSYTEFD. Residues 570–590 form a helical membrane-spanning segment; the sequence is ISGNVLALIFNQGMIWMGSFF. Over 591 to 593 the chain is Extracellular; it reads APS. A helical transmembrane segment spans residues 594–616; it reads LPGINILRLHTSMYFQCWAVMCC. Residues 617–630 are Cytoplasmic-facing; the sequence is NVPEARVFKASRSN. Residues 631 to 654 traverse the membrane as a helical segment; that stretch reads NFYLGMLLLILFLSTMPVLYMIVS. Over 655–697 the chain is Extracellular; it reads LPPSFDCGPFSGKNRMFEVIGETLEHDFPSWMAKILRQLSNPG. Residues 698 to 731 traverse the membrane as a helical segment; sequence LVIAVILVMVLTIYYLNATAKGQKAANLDLKKKM. At 732-757 the chain is on the cytoplasmic side; that stretch reads KQQALENKMRNKKMAAARAAAAAGGQ.

The protein belongs to the TMC family. Forms the MET channel composed of TMC dimer (TMC1 or TMC2), TMIE, TOMT, CIB (CIB2 or CIB3), LHFPL5 and PCDH15. Interacts with PIEZO1 and PIEZO2; the interaction may be part of the MET complex. The interaction of TMC1 and TMC2 with TOMT is required for the transportation of TMC1/2 into the stereocilia of hair cells. Interacts (via N-terminus) with both isoforms CD1 and CD3 of PCDH15. Can form a heterodimer with TMC2, TMC5 or TMC7. In terms of tissue distribution, detected in cochlear inner and outer hair cells and in neurosensory epithelia of the vestibular end organs. Also expressed in cortex, cerebellum, eye, colon, ovary and testis.

Its subcellular location is the cell membrane. It carries out the reaction Ca(2+)(in) = Ca(2+)(out). Pore-forming subunit of the mechanotransducer (MET) non-selective cation channel complex located at the tips of stereocilia of cochlear hair cells and that mediates sensory transduction in the auditory system. The MET complex is composed of two dimeric pore-forming ion-conducting transmembrane TMC (TMC1 or TMC2) subunits, several auxiliary proteins including LHFPL5, TMIE, CIB2/3 and TOMT, the tip-link PCDH15, and possibly the PIEZO subunits. MET channel is activated by tension in the tip-link extending from the side wall of one stereocilium to the tip of the adjacent shorter stereocilium, where the channel is located. TMC1 MET channel is highly permeable to calcium and likely transports monovalent cations. Also involved in vestibular hair cells transduction current. In Mus musculus (Mouse), this protein is Transmembrane channel-like protein 1.